The primary structure comprises 303 residues: T-box protein 38 (303 aa).

The segment at residues 14-195 (LSTPEIWEEF…HNKFASGFRS (182 aa)) is a DNA-binding region (T-box). The interval 193–225 (FRSNGKRRLSSDSENSENSPPKRSKLVTPPTIS) is disordered. A compositionally biased stretch (low complexity) spans 204-213 (DSENSENSPP).

Its subcellular location is the nucleus. Transcription factor. Required for mesodermal induction, acting redundantly with transcription factor tbx-37. Together with tbx-37, acts by inducing cell fates in the AB lineage, thereby playing a role in development of the anterior pharynx. The protein is T-box protein 38 (tbx-38) of Caenorhabditis elegans.